The primary structure comprises 399 residues: UDP-galactopyranose mutase (399 aa).

Residues Ser25, 44 to 45 (EK), Asn52, and 71 to 72 (HI) each bind FAD. 6 residues coordinate UDP-alpha-D-galactose: Ser171, Trp175, Tyr200, Asn297, Arg306, and Tyr345. Position 374 (Arg374) interacts with FAD. Position 380 (Tyr380) interacts with UDP-alpha-D-galactose. 381–386 (IDMDRA) is a binding site for FAD.

It belongs to the UDP-galactopyranose/dTDP-fucopyranose mutase family. FAD is required as a cofactor.

It carries out the reaction UDP-alpha-D-galactose = UDP-alpha-D-galactofuranose. Functionally, involved in the conversion of UDP-GalP into UDP-GalF through a 2-keto intermediate. This chain is UDP-galactopyranose mutase (glf), found in Mycoplasma pneumoniae (strain ATCC 29342 / M129 / Subtype 1) (Mycoplasmoides pneumoniae).